Reading from the N-terminus, the 278-residue chain is Putative cuticle collagen 91 (278 aa).

Disordered stretches follow at residues 84–109 (LAKN…GVDG) and 140–278 (GPAG…SVRQ). Positions 89-98 (PPGPPGPPGA) are enriched in pro residues. 3 triple-helical region regions span residues 91–120 (GPPG…DGVA), 137–199 (GEAG…NGQR), and 202–264 (GTPG…PGPD). Residues 99–109 (PGAAGEPGVDG) are compositionally biased toward low complexity. The segment covering 158-167 (GADGQGGAPG) has biased composition (gly residues). 2 stretches are compositionally biased toward low complexity: residues 172–228 (EGPA…AGAP) and 236–245 (APGVDGQPGA).

This sequence belongs to the cuticular collagen family. As to quaternary structure, collagen polypeptide chains are complexed within the cuticle by disulfide bonds and other types of covalent cross-links.

Its function is as follows. Nematode cuticles are composed largely of collagen-like proteins. The cuticle functions both as an exoskeleton and as a barrier to protect the worm from its environment. The polypeptide is Putative cuticle collagen 91 (col-91) (Caenorhabditis elegans).